The following is a 419-amino-acid chain: UPF0229 protein Tbd_1233 (419 aa).

Residues 85 to 108 (GDRIDRPAGEGGGGSGGSPDGEGM) form a disordered region. Residues 93 to 104 (GEGGGGSGGSPD) show a composition bias toward gly residues.

It belongs to the UPF0229 family.

This is UPF0229 protein Tbd_1233 from Thiobacillus denitrificans (strain ATCC 25259 / T1).